A 212-amino-acid chain; its full sequence is Ribosomal RNA small subunit methyltransferase G (212 aa).

S-adenosyl-L-methionine-binding positions include Gly80, Leu85, 131–132 (AE), and Arg146.

Belongs to the methyltransferase superfamily. RNA methyltransferase RsmG family.

The protein resides in the cytoplasm. It catalyses the reaction guanosine(527) in 16S rRNA + S-adenosyl-L-methionine = N(7)-methylguanosine(527) in 16S rRNA + S-adenosyl-L-homocysteine. Specifically methylates the N7 position of guanine in position 527 of 16S rRNA. This chain is Ribosomal RNA small subunit methyltransferase G, found in Xanthomonas oryzae pv. oryzae (strain MAFF 311018).